Reading from the N-terminus, the 35-residue chain is Dermonecrotic toxin LdSicTox-alpha-1 (35 aa).

The active site involves His11. Mg(2+) contacts are provided by Glu31 and Asp33.

The protein belongs to the arthropod phospholipase D family. Class I subfamily. The cofactor is Mg(2+). In terms of processing, contains 1 disulfide bond. Expressed by the venom gland.

The protein resides in the secreted. The catalysed reaction is an N-(acyl)-sphingosylphosphocholine = an N-(acyl)-sphingosyl-1,3-cyclic phosphate + choline. The enzyme catalyses an N-(acyl)-sphingosylphosphoethanolamine = an N-(acyl)-sphingosyl-1,3-cyclic phosphate + ethanolamine. It carries out the reaction a 1-acyl-sn-glycero-3-phosphocholine = a 1-acyl-sn-glycero-2,3-cyclic phosphate + choline. It catalyses the reaction a 1-acyl-sn-glycero-3-phosphoethanolamine = a 1-acyl-sn-glycero-2,3-cyclic phosphate + ethanolamine. Dermonecrotic toxins cleave the phosphodiester linkage between the phosphate and headgroup of certain phospholipids (sphingolipid and lysolipid substrates), forming an alcohol (often choline) and a cyclic phosphate. This toxin acts on sphingomyelin (SM). It may also act on ceramide phosphoethanolamine (CPE), lysophosphatidylcholine (LPC) and lysophosphatidylethanolamine (LPE), but not on lysophosphatidylserine (LPS), and lysophosphatidylglycerol (LPG). It acts by transphosphatidylation, releasing exclusively cyclic phosphate products as second products. Induces dermonecrosis, hemolysis, increased vascular permeability, edema, inflammatory response, and platelet aggregation. The chain is Dermonecrotic toxin LdSicTox-alpha-1 from Loxosceles deserta (Desert recluse spider).